Reading from the N-terminus, the 316-residue chain is tRNA methyltransferase 10 homolog B (316 aa).

The stretch at 73-98 forms a coiled coil; the sequence is EKIVAAKKSKRKQEKERRKANRVENS. The disordered stretch occupies residues 77-96; it reads AAKKSKRKQEKERRKANRVE. The region spanning 113 to 310 is the SAM-dependent MTase TRM10-type domain; the sequence is IKERLLEAKH…KGVSSRKGYV (198 aa).

Belongs to the class IV-like SAM-binding methyltransferase superfamily. TRM10 family.

The enzyme catalyses guanosine(9) in tRNA + S-adenosyl-L-methionine = N(1)-methylguanosine(9) in tRNA + S-adenosyl-L-homocysteine + H(+). S-adenosyl-L-methionine-dependent guanine N(1)-methyltransferase that catalyzes the formation of N(1)-methylguanine at position 9 (m1G9) in tRNAs. Probably not able to catalyze formation of N(1)-methyladenine at position 9 (m1A9) in tRNAs. This Bos taurus (Bovine) protein is tRNA methyltransferase 10 homolog B (TRMT10B).